A 279-amino-acid chain; its full sequence is MGLFGGGNSKSTSNQTTNNENTNIATQGDNLGAVINGNGNSVTMTDHGLVDALVDIGGYMSDSTQAAFGAASDMAYSSTEFAGQAITDGFDYAEGVNRDSLDMAEGINRDSLNFGRDALSVTGDLMTDAMQYSSDAMLASIEGNAGLAGQVMDASTTMTGQSLNFGLDTFSGAMDSLNQSNNNMALLAEFTSNQSTDLARDSMAFGADLMAQYQDNISASNYDAREHMLDASKTAMQFADNMSRSDGQQLAKDSNKTLMIGIVAVSAAVGLYAISKGVN.

Residues 1–28 are disordered; the sequence is MGLFGGGNSKSTSNQTTNNENTNIATQG. The segment covering 9–23 has biased composition (low complexity); it reads SKSTSNQTTNNENTN. A helical membrane pass occupies residues 256–273; that stretch reads KTLMIGIVAVSAAVGLYA.

The protein localises to the host membrane. This is an uncharacterized protein from Pseudoalteromonas espejiana (Bacteriophage PM2).